Here is a 426-residue protein sequence, read N- to C-terminus: Serine--tRNA ligase (426 aa).

230 to 232 (TAE) provides a ligand contact to L-serine. 261-263 (RSE) contributes to the ATP binding site. Glu-284 provides a ligand contact to L-serine. Residue 348–351 (EISS) participates in ATP binding. Ser-384 contributes to the L-serine binding site.

This sequence belongs to the class-II aminoacyl-tRNA synthetase family. Type-1 seryl-tRNA synthetase subfamily. In terms of assembly, homodimer. The tRNA molecule binds across the dimer.

It localises to the cytoplasm. The enzyme catalyses tRNA(Ser) + L-serine + ATP = L-seryl-tRNA(Ser) + AMP + diphosphate + H(+). It carries out the reaction tRNA(Sec) + L-serine + ATP = L-seryl-tRNA(Sec) + AMP + diphosphate + H(+). It functions in the pathway aminoacyl-tRNA biosynthesis; selenocysteinyl-tRNA(Sec) biosynthesis; L-seryl-tRNA(Sec) from L-serine and tRNA(Sec): step 1/1. Functionally, catalyzes the attachment of serine to tRNA(Ser). Is also able to aminoacylate tRNA(Sec) with serine, to form the misacylated tRNA L-seryl-tRNA(Sec), which will be further converted into selenocysteinyl-tRNA(Sec). This Streptococcus mutans serotype c (strain ATCC 700610 / UA159) protein is Serine--tRNA ligase.